The chain runs to 1338 residues: Protein dispatched homolog 3 (1338 aa).

At 1-67 the chain is on the cytoplasmic side; sequence MDTEDDPLLQ…VGWIFTNPYC (67 aa). The chain crosses the membrane as a helical span at residues 68 to 88; the sequence is AGFILFLGCAIPAVLAVVMFL. The Lumenal portion of the chain corresponds to 89–406; sequence HYPALDIDIS…YEVRRTFNND (318 aa). The segment at 164–196 is disordered; the sequence is TRAKRSAPQGRTSSPEPRAHPHPGNETSRVTRG. Residues 401–559 form the SSD domain; it reads RTFNNDMLLA…LFTMPAALGI (159 aa). A helical transmembrane segment spans residues 407 to 427; sequence MLLAFISSSCIAVLVYILTSC. A topological domain (cytoplasmic) is located at residue Ser-428. Residues 429–449 form a helical membrane-spanning segment; it reads VFLSFFGIASIGLSCLVALFL. Residues 450-452 are Lumenal-facing; sequence YHV. A helical transmembrane segment spans residues 453–473; that stretch reads VFGIQYLGILNGVAAFVIVGI. The Cytoplasmic portion of the chain corresponds to 474–517; it reads GVDDVFVFINTYRQATHLKDLRLRMIHTIQTAGKATFFTSLTTA. The helical transmembrane segment at 518–538 threads the bilayer; that stretch reads AAYAANIFSQIPAVHDFGLFM. A topological domain (lumenal) is located at residue Ser-539. Residues 540–560 form a helical membrane-spanning segment; it reads LIVSCCWVAVLFTMPAALGIW. Residues 561 to 672 are Cytoplasmic-facing; the sequence is TLYVSPLESS…WVLWSAVKSR (112 aa). A helical transmembrane segment spans residues 673 to 693; it reads WVIVGLFLLVLLLSIFFASRL. Residues 694–1128 lie on the Lumenal side of the membrane; the sequence is RPASRAPVLF…IFMEIIGVQS (435 aa). Positions 747–768 are disordered; sequence SLEKKKRGSASPWGSKGSISDT. The helical transmembrane segment at 1129-1149 threads the bilayer; sequence ALYGLILSLVICVAAVAVFTT. His-1150 is a topological domain (cytoplasmic). A helical membrane pass occupies residues 1151–1171; sequence ILLLLPVLLSILGVVCLVVTI. The Lumenal segment spans residues 1172 to 1237; the sequence is MYWSGWEMGA…TIEAIRHVGV (66 aa). Residues 1238 to 1258 form a helical membrane-spanning segment; that stretch reads AIVSSAVTTVIATVPLFFCII. The Cytoplasmic segment spans residues 1259 to 1266; that stretch reads APFAKFGK. Residues 1267–1287 form a helical membrane-spanning segment; sequence IVALNTGVSILYTLTVSTALL. At 1288-1302 the chain is on the lumenal side; that stretch reads SIMGPGTFTRSRTSC. A helical transmembrane segment spans residues 1303–1323; that stretch reads LKAVAGVLLAGLLGLCICLAL. At 1324–1338 the chain is on the cytoplasmic side; sequence LKGGFKIPLPNGTAL.

The protein belongs to the patched family. In terms of tissue distribution, expressed in retina, hippocampus and cerebellum. Expressed in the ganglion and bipolar cells of the inner and outer nuclear layers of the retina and in Purkinje cells (at protein level). Expressed strongly in brain and retina, weakly in testis and bone marrow.

The protein localises to the endoplasmic reticulum membrane. It is found in the nucleus membrane. Its subcellular location is the cytoplasmic vesicle membrane. In terms of biological role, plays a role in neuronal proliferation and differentiation. Plays a role in the accumulation of cellular cholesterol. Involved in intracellular lipid droplet formation. May contribute to cholesterol homeostasis in neuronal cells. The protein is Protein dispatched homolog 3 of Gallus gallus (Chicken).